A 145-amino-acid chain; its full sequence is 3-dehydroquinate dehydratase (145 aa).

Residue Y22 is the Proton acceptor of the active site. Substrate contacts are provided by N73, H79, and D86. H99 acts as the Proton donor in catalysis. Substrate-binding positions include 100 to 101 (LS) and R110.

Belongs to the type-II 3-dehydroquinase family. In terms of assembly, homododecamer.

The catalysed reaction is 3-dehydroquinate = 3-dehydroshikimate + H2O. Its pathway is metabolic intermediate biosynthesis; chorismate biosynthesis; chorismate from D-erythrose 4-phosphate and phosphoenolpyruvate: step 3/7. In terms of biological role, catalyzes a trans-dehydration via an enolate intermediate. The sequence is that of 3-dehydroquinate dehydratase from Prochlorococcus marinus (strain NATL1A).